Consider the following 407-residue polypeptide: Probable protein S-acyltransferase 9 (407 aa).

2 consecutive transmembrane segments (helical) span residues 28 to 48 (WSIPFTFLLIITPVCFFSVFV) and 62 to 82 (GHVFLVAGVLFTVFVLILLFL). The region spanning 136–179 (KYCDTCMLYRPPRCSHCSICNNCVERFDHHCPWRNYRYFFMFVS) is the DHHC domain. Catalysis depends on C166, which acts as the S-palmitoyl cysteine intermediate. The next 2 membrane-spanning stretches (helical) occupy residues 174-194 (FFMFVSSATILCIYIFSMSAL) and 217-237 (AVMLMIYCFISLWFVGGLTGF). Positions 300 to 407 (LATTWERPEE…RSYAAAEEGR (108 aa)) are disordered. Residues 346 to 356 (DTAHHKIDIDQ) show a composition bias toward basic and acidic residues.

This sequence belongs to the DHHC palmitoyltransferase family. As to expression, mainly expressed in seeds.

Its subcellular location is the cell membrane. The catalysed reaction is L-cysteinyl-[protein] + hexadecanoyl-CoA = S-hexadecanoyl-L-cysteinyl-[protein] + CoA. Palmitoyl acyltransferase. The protein is Probable protein S-acyltransferase 9 (PAT09) of Arabidopsis thaliana (Mouse-ear cress).